Consider the following 775-residue polypeptide: Subtilisin-like protease SBT1.2 (775 aa).

The N-terminal stretch at Met1–Ser20 is a signal peptide. An Inhibitor I9 domain is found at Thr27–Val111. Residues Ser116–Ile618 enclose the Peptidase S8 domain. Residues Asp146 and His222 each act as charge relay system in the active site. In terms of domain architecture, PA spans Gly388–Tyr470. N-linked (GlcNAc...) asparagine glycans are attached at residues Asn472 and Asn544. Ser552 (charge relay system) is an active-site residue. N-linked (GlcNAc...) asparagine glycosylation occurs at Asn652.

It belongs to the peptidase S8 family. As to expression, mostly expressed in leaves and cotyledons (especially in epidermal cells), and, to a lower extent, in floral buds, stems, and siliques. Strongly expressed in stomatal precursor cells (meristemoids and guard mother cells).

Its subcellular location is the secreted. It is found in the extracellular space. The protein resides in the apoplast. It localises to the cell membrane. Functionally, serine protease involved in the negative regulation of stomatal density and distribution. Not active on EPFL6 (AC Q1PEY6). Positive regulator of water use efficiency (WUE). This Arabidopsis thaliana (Mouse-ear cress) protein is Subtilisin-like protease SBT1.2.